The following is a 347-amino-acid chain: MRIEEDLKLGFKDVLIRPKRSTLKSRSDVELEREFTFKHSGLTWSGVPIIAANMDTVGTFSMAKALATFGILTAVHKHYTAEEWLAFTQGASADVLKHVMVSTGTSDADFEKTQQILSQNPQLNFVCIDVANGYSEHFVQFVAKAREAWPQKTIIAGNVVTGEMCEELILSGADIVKVGIGPGSVCTTRVKTGVGYPQLSAVIECADAAHGLGGQIISDGGCTMPGDVAKAFGGGADFVMLGGMLAGHEESGGTIVEENGEKFMLFYGMSSESAMTRHVGGVAKYRAAEGKTVKLPLRGPVENTARDILGGLRSACTYVGASRLKELTKRTTFIRVQEQENRVFNSL.

108–131 provides a ligand contact to NADP(+); the sequence is ADFEKTQQILSQNPQLNFVCIDVA. K(+)-binding residues include glycine 181 and glycine 183. The active-site Thioimidate intermediate is the cysteine 186. An NADP(+)-binding site is contributed by 216-239; the sequence is IISDGGCTMPGDVAKAFGGGADFV.

The protein belongs to the IMPDH/GMPR family. GuaC type 1 subfamily. Homotetramer.

The catalysed reaction is IMP + NH4(+) + NADP(+) = GMP + NADPH + 2 H(+). In terms of biological role, catalyzes the irreversible NADPH-dependent deamination of GMP to IMP. It functions in the conversion of nucleobase, nucleoside and nucleotide derivatives of G to A nucleotides, and in maintaining the intracellular balance of A and G nucleotides. The chain is GMP reductase from Klebsiella pneumoniae subsp. pneumoniae (strain ATCC 700721 / MGH 78578).